The sequence spans 344 residues: tRNA N6-adenosine threonylcarbamoyltransferase (344 aa).

2 residues coordinate Fe cation: His-111 and His-115. Substrate is bound by residues 133 to 137 (LVSGG), Asp-166, Gly-179, and Asn-283. Position 311 (Asp-311) interacts with Fe cation.

This sequence belongs to the KAE1 / TsaD family. The cofactor is Fe(2+).

The protein resides in the cytoplasm. The enzyme catalyses L-threonylcarbamoyladenylate + adenosine(37) in tRNA = N(6)-L-threonylcarbamoyladenosine(37) in tRNA + AMP + H(+). Required for the formation of a threonylcarbamoyl group on adenosine at position 37 (t(6)A37) in tRNAs that read codons beginning with adenine. Is involved in the transfer of the threonylcarbamoyl moiety of threonylcarbamoyl-AMP (TC-AMP) to the N6 group of A37, together with TsaE and TsaB. TsaD likely plays a direct catalytic role in this reaction. The chain is tRNA N6-adenosine threonylcarbamoyltransferase from Orientia tsutsugamushi (strain Ikeda) (Rickettsia tsutsugamushi).